Here is a 551-residue protein sequence, read N- to C-terminus: Protein GPR107 (551 aa).

The N-terminal stretch at 1-33 (MAVPVPLGRFGSFCLRLLRLLALLELLVHPVLG) is a signal peptide. Residues 40–262 (LKDDVRHKVH…YLSAGEIPLP (223 aa)) lie on the Extracellular side of the membrane. N-linked (GlcNAc...) asparagine glycosylation is found at Asn64 and Asn209. Cys106 and Cys226 are joined by a disulfide. Residues 263 to 283 (KLYVSMALFFFLSGTIWIHIL) form a helical membrane-spanning segment. The Cytoplasmic segment spans residues 284–292 (RKRRNDVFK). A helical membrane pass occupies residues 293 to 313 (IHWLMAALPFTKSLSLVFHAI). The Extracellular segment spans residues 314–336 (DYHYISSQGFPIEGWAVVYYITH). Residues 337–357 (LLKGALLFITIALIGTGWAFI) form a helical membrane-spanning segment. The Cytoplasmic segment spans residues 358–367 (KHILSDKDKK). Residues 368–388 (IFMIVIPLQVLANVAYIIIES) form a helical membrane-spanning segment. Over 389-401 (TEEGTTEYGLWKD) the chain is Extracellular. A helical membrane pass occupies residues 402–422 (SLFLVDLLCCGAILFPVVWSI). Residues 423–449 (RHLQEASATDGKAAINLAKLRLFRHYY) lie on the Cytoplasmic side of the membrane. A helical transmembrane segment spans residues 450–470 (VLIVCYIYFTRIIAFLLKFAV). Topologically, residues 471–475 (PFQWK) are extracellular. The chain crosses the membrane as a helical span at residues 476–495 (WLYQLLDETATLVFFVLTGY). The Cytoplasmic portion of the chain corresponds to 496 to 551 (KFRPASDNPYLQLSQEDDDLEMESVVTTSGVMENMKKVKKVSNGAVEPQGSWEGTA). Ser537 carries the post-translational modification Phosphoserine.

This sequence belongs to the LU7TM family. Post-translationally, cleaved by FURIN to yield two fragments that remain associated via a disulfide bond.

The protein localises to the cell membrane. The protein resides in the golgi apparatus. It localises to the trans-Golgi network membrane. Has been proposed to act as a receptor for neuronostatin, a peptide derived from the somatostatin/SST precursor. Involved in blood sugar regulation through the induction of glucagon in response to low glucose. This chain is Protein GPR107 (Gpr107), found in Mus musculus (Mouse).